A 457-amino-acid chain; its full sequence is UDP-glycosyltransferase 708C1 (457 aa).

UDP-alpha-D-glucose is bound at residue G31. The active-site Proton acceptor is the H32. An an anthocyanidin-binding site is contributed by H32. T34 serves as a coordination point for UDP-alpha-D-glucose. An an anthocyanidin-binding site is contributed by N94. The active-site Charge relay is the D129. Position 150 (T150) interacts with UDP-alpha-D-glucose. Residues 279–280 (NR) form a UDP region. Residues V341, Q343, H358, W361, N362, S363, and E366 each contribute to the UDP-alpha-D-glucose site. G381 serves as a coordination point for an anthocyanidin. Residues D382 and Q383 each coordinate UDP-alpha-D-glucose.

The protein belongs to the UDP-glycosyltransferase family. As to expression, expressed in cotyledons. Not detected in flowers, leaves, roots and hypocotyls.

The enzyme catalyses a 3'-hydro-2'-hydroxy-beta-oxodihydrochalcone + UDP-alpha-D-glucose = a 3'-(beta-D-glucopyranosyl)-2'-hydroxy-beta-oxodihydrochalcone + UDP + H(+). Its function is as follows. UDP-glucose-dependent glucosyltransferase catalyzing the C-glucosylation of 2-hydroxyflavanones (2-hydroxynaringenin, 2-hydroxyeriodictyol and 2-hydroxypinocembrin) and phloretin. No activity with flavanones, flavones or flavonols. Exhibits C-glycosylation activity toward 2',4',6'-trihydroxyacetophenone and phloretin using UDP-glucose as sugar donor. Can use UDP-galactose as sugar donor, but catalytic efficiency is 14-fold lower toward UDP-galactose than toward UDP-glucose. This Fagopyrum esculentum (Common buckwheat) protein is UDP-glycosyltransferase 708C1.